Consider the following 329-residue polypeptide: G-protein coupled bile acid receptor 1 (329 aa).

Residues 1–18 lie on the Extracellular side of the membrane; the sequence is MMSHNTTELSAIPRGVQE. Residue asparagine 5 is glycosylated (N-linked (GlcNAc...) asparagine). Residues 19–39 form a helical membrane-spanning segment; the sequence is LSLVLASLIVIANLLLALGIV. Residues 40–49 lie on the Cytoplasmic side of the membrane; the sequence is LDRHLRSPPA. Residues 50–70 traverse the membrane as a helical segment; it reads GCFFLSLLLAGLLTGLALPTL. Over 71–84 the chain is Extracellular; that stretch reads PGLWNRSHQGYWSC. Asparagine 75 carries an N-linked (GlcNAc...) asparagine glycan. Cysteine 84 and cysteine 154 are joined by a disulfide. The chain crosses the membrane as a helical span at residues 85–105; the sequence is LLLHLAPNFCFLSLLANLLLV. The Cytoplasmic portion of the chain corresponds to 106–124; sequence HGERYMAVLQPLRPHGSVR. The helical transmembrane segment at 125 to 145 threads the bilayer; that stretch reads LALFLTWISSLLFASLPALGW. The Extracellular segment spans residues 146-157; it reads NHWSPGANCSSQ. Residue asparagine 153 is glycosylated (N-linked (GlcNAc...) asparagine). The helical transmembrane segment at 158-178 threads the bilayer; it reads AIFPAPYLYLEVYGLLLPAVG. Residues 179–229 are Cytoplasmic-facing; that stretch reads ATALLSVRVLATAHHQLREIRRLERAVCRDAPSTLARALTWRQARAQAGAT. Residues 230–250 form a helical membrane-spanning segment; sequence LLFLLCWGPYVATLLLSVLAY. Residues 251–260 are Extracellular-facing; sequence ERRPPLGPVT. Residues 261 to 281 form a helical membrane-spanning segment; sequence LLSLISLGSASAAVVPVAMGL. Residues 282–329 are Cytoplasmic-facing; the sequence is GDQRYTAPWRTAAQRWLQVLRGRPKRANPGPSTAYHSSSQCSTDLDLN. The tract at residues 306 to 329 is disordered; sequence KRANPGPSTAYHSSSQCSTDLDLN. A compositionally biased stretch (polar residues) spans 311-329; it reads GPSTAYHSSSQCSTDLDLN.

The protein belongs to the G-protein coupled receptor 1 family.

It localises to the cell membrane. Functionally, receptor for bile acid. Bile acid-binding induces its internalization, activation of extracellular signal-regulated kinase and intracellular cAMP production. May be involved in the suppression of macrophage functions by bile acids. Involved in bile acid promoted GLP1R secretion. The sequence is that of G-protein coupled bile acid receptor 1 (Gpbar1) from Rattus norvegicus (Rat).